We begin with the raw amino-acid sequence, 87 residues long: Small ribosomal subunit protein bS20 (87 aa).

Belongs to the bacterial ribosomal protein bS20 family.

Its function is as follows. Binds directly to 16S ribosomal RNA. The chain is Small ribosomal subunit protein bS20 from Sphingopyxis alaskensis (strain DSM 13593 / LMG 18877 / RB2256) (Sphingomonas alaskensis).